Consider the following 93-residue polypeptide: Co-chaperonin GroES (93 aa).

Belongs to the GroES chaperonin family. As to quaternary structure, heptamer of 7 subunits arranged in a ring. Interacts with the chaperonin GroEL.

The protein resides in the cytoplasm. Its function is as follows. Together with the chaperonin GroEL, plays an essential role in assisting protein folding. The GroEL-GroES system forms a nano-cage that allows encapsulation of the non-native substrate proteins and provides a physical environment optimized to promote and accelerate protein folding. GroES binds to the apical surface of the GroEL ring, thereby capping the opening of the GroEL channel. In Streptococcus gordonii (strain Challis / ATCC 35105 / BCRC 15272 / CH1 / DL1 / V288), this protein is Co-chaperonin GroES.